The chain runs to 102 residues: Large ribosomal subunit protein uL24 (102 aa).

It belongs to the universal ribosomal protein uL24 family. As to quaternary structure, part of the 50S ribosomal subunit.

In terms of biological role, one of two assembly initiator proteins, it binds directly to the 5'-end of the 23S rRNA, where it nucleates assembly of the 50S subunit. One of the proteins that surrounds the polypeptide exit tunnel on the outside of the subunit. The chain is Large ribosomal subunit protein uL24 from Ralstonia nicotianae (strain ATCC BAA-1114 / GMI1000) (Ralstonia solanacearum).